The primary structure comprises 337 residues: ATP-dependent (S)-NAD(P)H-hydrate dehydratase (337 aa).

Serine 6 bears the Phosphoserine mark. One can recognise a YjeF C-terminal domain in the interval 11-335 (IKLAQKRCIP…DRVGEVFAKL (325 aa)). Residues glycine 121 and 182–188 (NVVEFKR) contribute to the (6S)-NADPHX site. Residues 218 to 222 (KGQSD) and 240 to 249 (GSNKRVGGQG) each bind ATP. A disordered region spans residues 224–246 (IFSPDSEKDMLTNSEEGSNKRVG). Aspartate 250 contributes to the (6S)-NADPHX binding site.

This sequence belongs to the NnrD/CARKD family. It depends on Mg(2+) as a cofactor.

Its subcellular location is the cytoplasm. The enzyme catalyses (6S)-NADHX + ATP = ADP + phosphate + NADH + H(+). The catalysed reaction is (6S)-NADPHX + ATP = ADP + phosphate + NADPH + H(+). Its function is as follows. Catalyzes the dehydration of the S-form of NAD(P)HX at the expense of ATP, which is converted to ADP. Together with NAD(P)HX epimerase, which catalyzes the epimerization of the S- and R-forms, the enzyme allows the repair of both epimers of NAD(P)HX, a damaged form of NAD(P)H that is a result of enzymatic or heat-dependent hydration. The polypeptide is ATP-dependent (S)-NAD(P)H-hydrate dehydratase (Saccharomyces cerevisiae (strain ATCC 204508 / S288c) (Baker's yeast)).